Here is a 31-residue protein sequence, read N- to C-terminus: Cytochrome b6-f complex subunit 6 (31 aa).

A helical transmembrane segment spans residues 5–25; the sequence is ISYLGILVGALLFVTITFLTL.

Belongs to the PetL family. In terms of assembly, the 4 large subunits of the cytochrome b6-f complex are cytochrome b6, subunit IV (17 kDa polypeptide, PetD), cytochrome f and the Rieske protein, while the 4 small subunits are PetG, PetL, PetM and PetN. The complex functions as a dimer.

The protein localises to the plastid. It is found in the chloroplast thylakoid membrane. Its function is as follows. Component of the cytochrome b6-f complex, which mediates electron transfer between photosystem II (PSII) and photosystem I (PSI), cyclic electron flow around PSI, and state transitions. PetL is important for photoautotrophic growth as well as for electron transfer efficiency and stability of the cytochrome b6-f complex. This chain is Cytochrome b6-f complex subunit 6, found in Chlorokybus atmophyticus (Soil alga).